The following is an 875-amino-acid chain: Leucine--tRNA ligase (875 aa).

Residues 43 to 53 (PYPSGRIHMGH) carry the 'HIGH' region motif. Positions 633–637 (KMSKS) match the 'KMSKS' region motif. Lys636 lines the ATP pocket.

The protein belongs to the class-I aminoacyl-tRNA synthetase family.

The protein resides in the cytoplasm. The catalysed reaction is tRNA(Leu) + L-leucine + ATP = L-leucyl-tRNA(Leu) + AMP + diphosphate. In Bartonella bacilliformis (strain ATCC 35685 / KC583 / Herrer 020/F12,63), this protein is Leucine--tRNA ligase.